Here is a 206-residue protein sequence, read N- to C-terminus: Ras-related protein RABH1a (206 aa).

Residue 14–21 (GDQGVGKT) participates in GTP binding. The Effector region signature appears at 36–44 (YQATIGIDF). GTP is bound by residues 62–66 (DTAGQ), 120–123 (NKTD), and 150–151 (SA). Residues Cys204 and Cys206 are each lipidated (S-geranylgeranyl cysteine). Cys206 carries the cysteine methyl ester modification.

This sequence belongs to the small GTPase superfamily. Rab family.

It is found in the golgi apparatus membrane. Protein transport. Regulator of membrane traffic from the Golgi apparatus towards the endoplasmic reticulum (ER). The protein is Ras-related protein RABH1a (RABH1A) of Arabidopsis thaliana (Mouse-ear cress).